Here is a 330-residue protein sequence, read N- to C-terminus: Putative protein DDB_G0285185 (330 aa).

Residues 212–240 form a disordered region; it reads NKLQNQVQSSPKLSSPITKNKEQIVSTTS. A compositionally biased stretch (polar residues) spans 214-240; that stretch reads LQNQVQSSPKLSSPITKNKEQIVSTTS.

The protein is Putative protein DDB_G0285185 of Dictyostelium discoideum (Social amoeba).